The chain runs to 225 residues: Ribonuclease 3 (225 aa).

Positions Val-5–Asp-127 constitute an RNase III domain. Glu-40 contacts Mg(2+). Asp-44 is an active-site residue. Asp-113 and Glu-116 together coordinate Mg(2+). Glu-116 is a catalytic residue. In terms of domain architecture, DRBM spans Asp-154 to Asn-223.

Belongs to the ribonuclease III family. As to quaternary structure, homodimer. It depends on Mg(2+) as a cofactor.

It is found in the cytoplasm. It catalyses the reaction Endonucleolytic cleavage to 5'-phosphomonoester.. Its function is as follows. Digests double-stranded RNA. Involved in the processing of primary rRNA transcript to yield the immediate precursors to the large and small rRNAs (23S and 16S). Processes some mRNAs, and tRNAs when they are encoded in the rRNA operon. Processes pre-crRNA and tracrRNA of type II CRISPR loci if present in the organism. This is Ribonuclease 3 from Pseudoalteromonas translucida (strain TAC 125).